A 1073-amino-acid polypeptide reads, in one-letter code: DNA-directed RNA polymerase subunit beta (1073 aa).

It belongs to the RNA polymerase beta chain family. In terms of assembly, in plastids the minimal PEP RNA polymerase catalytic core is composed of four subunits: alpha, beta, beta', and beta''. When a (nuclear-encoded) sigma factor is associated with the core the holoenzyme is formed, which can initiate transcription.

The protein localises to the plastid. The protein resides in the chloroplast. The enzyme catalyses RNA(n) + a ribonucleoside 5'-triphosphate = RNA(n+1) + diphosphate. Its function is as follows. DNA-dependent RNA polymerase catalyzes the transcription of DNA into RNA using the four ribonucleoside triphosphates as substrates. The chain is DNA-directed RNA polymerase subunit beta from Aethionema grandiflorum (Persian stone-cress).